Here is a 515-residue protein sequence, read N- to C-terminus: Synaptic vesicular amine transporter (515 aa).

Topologically, residues 1–20 (MALSDLVLLRWLRDSRHSRK) are cytoplasmic. The helical transmembrane segment at 21–41 (LILFIVFLALLLDNMLLTVVV) threads the bilayer. Over 42–130 (PIIPSYLYSI…EDRDLLNENV (89 aa)) the chain is Lumenal, vesicle. N-linked (GlcNAc...) asparagine glycosylation is found at asparagine 56, asparagine 80, asparagine 81, asparagine 89, and asparagine 111. Cysteine 118 and cysteine 325 are joined by a disulfide. Residues 131–151 (QVGLLFASKATVQLLTNPFIG) form a helical membrane-spanning segment. Residues 152–160 (LLTNRIGYP) lie on the Cytoplasmic side of the membrane. A helical transmembrane segment spans residues 161–181 (IPMFAGFCIMFISTVMFAFSS). Residues 182–190 (SYAFLLIAR) are Lumenal, vesicle-facing. Residues 191 to 211 (SLQGIGSSCSSVAGMGMLASV) traverse the membrane as a helical segment. Topologically, residues 212–220 (YTDDEERGK) are cytoplasmic. The helical transmembrane segment at 221–243 (PMGIALGGLAMGVLVGPPFGSVL) threads the bilayer. Residues leucine 229 and valine 233 each contribute to the serotonin site. Over 244-249 (YEFVGK) the chain is Lumenal, vesicle. A helical membrane pass occupies residues 250 to 272 (TAPFLVLAALVLLDGAIQLFVLQ). Over 273–292 (PSRVQPESQKGTPLTTLLKD) the chain is Cytoplasmic. A helical transmembrane segment spans residues 293 to 312 (PYILIAAGSICFANMGIAML). 5 residues coordinate serotonin: asparagine 306, isoleucine 309, glutamate 313, phenylalanine 335, and tyrosine 342. Residues 313-329 (EPALPIWMMETMCSRKW) are Lumenal, vesicle-facing. Residues 330–353 (QLGVAFLPASISYLIGTNIFGILA) form a helical membrane-spanning segment. The Cytoplasmic portion of the chain corresponds to 354–358 (HKMGR). A helical membrane pass occupies residues 359–379 (WLCALLGMVIVGISILCIPFA). Residues 380–390 (KNIYGLIAPNF) are Lumenal, vesicle-facing. The chain crosses the membrane as a helical span at residues 391–411 (GVGFAIGMVDSSMMPIMGYLV). Aspartate 400 contacts serotonin. At 412–415 (DLRH) the chain is on the cytoplasmic side. Residues 416–436 (VSVYGSVYAIADVAFCMGYAI) traverse the membrane as a helical segment. Tyrosine 434 provides a ligand contact to serotonin. The Lumenal, vesicle portion of the chain corresponds to 437–441 (GPSAG). The helical transmembrane segment at 442–463 (GAIAKAIGFPWLMTIIGIIDIA) threads the bilayer. The Cytoplasmic portion of the chain corresponds to 464–515 (FAPLCFFLRSPPAKEEKMAILMDHNCPIKRKMYTQNNVQSYPIGDDEESESD). Phosphoserine; by CK2 is present on residues serine 512 and serine 514.

The protein belongs to the major facilitator superfamily. Vesicular transporter family. In terms of assembly, interacts with SLC6A3. Expressed in the substantia nigra and the tuberomammillary nucleus of the posterior hypothalamus. Expressed in stomach, in particular in varicose nerve fibers and enterochromaffin-like cells in the corpus region (at protein level).

It localises to the cytoplasmic vesicle. Its subcellular location is the secretory vesicle. The protein resides in the synaptic vesicle membrane. The protein localises to the secretory vesicle membrane. It is found in the cell projection. It localises to the axon. Its subcellular location is the dendrite. The enzyme catalyses serotonin(in) + 2 H(+)(out) = serotonin(out) + 2 H(+)(in). It catalyses the reaction dopamine(in) + 2 H(+)(out) = dopamine(out) + 2 H(+)(in). The catalysed reaction is histamine(in) + 2 H(+)(out) = histamine(out) + 2 H(+)(in). Strongly inhibited by reserpine and tetrabenazine. Also inhibited to a lesser extent by ketanserin and fenfluramine. Reserpine and ketanserin inhibit by blocking the substrate-binding pocket. Tetrabenazine traps SLC18A2/VMAT2 in an occluded conformation and its inhibition is specific to SLC18A2/VMAT2 but not SLC18A1/VMAT1. Functionally, electrogenic antiporter that exchanges one cationic monoamine with two intravesicular protons across the membrane of secretory and synaptic vesicles. Uses the electrochemical proton gradient established by the V-type proton-pump ATPase to accumulate high concentrations of monoamines inside the vesicles prior to their release via exocytosis. Transports a variety of catecholamines such as dopamine, adrenaline and noradrenaline, histamine, and indolamines such as serotonin. Regulates the transvesicular monoaminergic gradient that determines the quantal size. Mediates somatodendritic dopamine release in hippocampal neurons, likely as part of a regulated secretory pathway that integrates retrograde synaptic signals. Acts as a primary transporter for striatal dopamine loading ensuring impulse-dependent release of dopamine at the synaptic cleft. Responsible for histamine and serotonin storage and subsequent corelease from mast cell granules. This Rattus norvegicus (Rat) protein is Synaptic vesicular amine transporter (Slc18a2).